We begin with the raw amino-acid sequence, 296 residues long: Thioredoxin-related transmembrane protein 2 (296 aa).

An N-terminal signal peptide occupies residues 1 to 48 (MAVLAPLIALVYSVPRLSRWLAQPYYLLSALLSAAFLLVRKLPPLCHG). Topologically, residues 49–102 (LPTQREDGNPCDFDWREVEILMFLSAIVMMKNRRSITVEQHIGNIFMFSKVANA) are extracellular. A helical membrane pass occupies residues 103 to 125 (ILFFRLDIRMGLLYITLCIVFLM). In terms of domain architecture, Thioredoxin spans 114 to 270 (LLYITLCIVF…YQRAKKPSKA (157 aa)). At 126–296 (TCEPPLYMGP…VSDGENKKDK (171 aa)) the chain is on the cytoplasmic side. S211, S243, and S288 each carry phosphoserine. Positions 266-296 (KPSKAGDSIPEEQPVASAPTTVSDGENKKDK) are disordered. Residues 293–296 (KKDK) carry the Di-lysine motif motif.

Monomer. Homodimer; disulfide-linked. Occurs in both reduced and oxidized monomeric form. Oxidative conditions increase homodimerization. Interacts with CANX. Interacts with ATP2A2.

It is found in the endoplasmic reticulum membrane. The protein resides in the mitochondrion membrane. Endoplasmic reticulum and mitochondria-associated protein that probably functions as a regulator of cellular redox state and thereby regulates protein post-translational modification, protein folding and mitochondrial activity. Indirectly regulates neuronal proliferation, migration, and organization in the developing brain. This is Thioredoxin-related transmembrane protein 2 (TMX2) from Pongo abelii (Sumatran orangutan).